Reading from the N-terminus, the 144-residue chain is Maximins 2/H8 type 2 (144 aa).

An N-terminal signal peptide occupies residues 1–18; sequence MNFKYIVAVSFLIASAYA. Residues 19–43 constitute a propeptide that is removed on maturation; it reads RSEENEIQSLSQRDVLEEESLREIR. An Asparagine amide modification is found at asparagine 70. The propeptide occupies 74-123; it reads TAEEHEVMKRLETVMRDLDSLDYPEEASERETRGFNQEEIANLFTKKEKR. Isoleucine 143 is subject to Isoleucine amide.

It belongs to the bombinin family. As to expression, expressed by the skin glands.

It localises to the secreted. Maximin-2 shows antibacterial activity against both Gram-positive and Gram-negative bacteria. It also shows antimicrobial activity against the fungus C.albicans, but not against A.flavus nor P.uticale. It has little hemolytic activity. Functionally, maximin-H8 shows antimicrobial activity against bacteria and against the fungus C.albicans. Shows strong hemolytic activity. The polypeptide is Maximins 2/H8 type 2 (Bombina maxima (Giant fire-bellied toad)).